We begin with the raw amino-acid sequence, 250 residues long: Aquaporin TIP2-3 (250 aa).

Residue M1 is modified to N-acetylmethionine. Over 1–24 (MVKIEVGSVGDSFSVSSLKAYLSE) the chain is Cytoplasmic. An N6,N6-dimethyllysine modification is found at K3. Residues 25–45 (FIATLLFVFAGVGSAVAFAKL) form a helical membrane-spanning segment. Topologically, residues 46–54 (TSDGALDPA) are vacuolar. A helical transmembrane segment spans residues 55–75 (GLVAIAIAHAFALFVGVSIAA). Over 76-101 (NISGGHLNPAVTLGLAIGGNITLITG) the chain is Cytoplasmic. An NPA 1 motif is present at residues 83–85 (NPA). Residues 102–122 (FFYWIAQCLGSIVACLLLVFV) form a helical membrane-spanning segment. Topologically, residues 123-134 (TNGKSVPTHGVS) are vacuolar. A helical membrane pass occupies residues 135–155 (AGLGAVEGVVMEIVVTFALVY). Topologically, residues 156–168 (TVYATAADPKKGS) are cytoplasmic. A helical membrane pass occupies residues 169–189 (LGTIAPIAIGFIVGANILAAG). The Vacuolar portion of the chain corresponds to 190–217 (PFSGGSMNPARSFGPAVVSGDLSQIWIY). Residues 197-199 (NPA) carry the NPA 2 motif. A helical transmembrane segment spans residues 218 to 238 (WVGPLVGGALAGLIYGDVFIG). The Cytoplasmic portion of the chain corresponds to 239 to 250 (SYEAVETREIRV).

Belongs to the MIP/aquaporin (TC 1.A.8) family. TIP (TC 1.A.8.10) subfamily. Interacts with cucumber mosaic virus (CMV) Protein 1a. As to expression, widely expressed.

The protein localises to the vacuole membrane. In terms of biological role, transports methylammonium or ammonium in yeast cells, preferentially at high medium pH. May participate in vacuolar compartmentation and detoxification of ammonium. This is Aquaporin TIP2-3 (TIP2-3) from Arabidopsis thaliana (Mouse-ear cress).